Reading from the N-terminus, the 293-residue chain is MDSGLRSLLSDHSRYVESFRLFLQNSTEHQCMQHFIETKLPDIISSIGNDKPVIDVLGIGSGSGEIDLQMIAKIQARWPGVSINNQIVEPSAEQILGYKERVAKAPNLGYVTFSWHHQTSSEFEHRVTEDKQMTKYDFIHMIQMLYYVKDVPGTLKFFKSCLAPNGKLLIILVSGNSGWAPLWKKYGQRLPLNDLCLYVTAGDIAEMLSSMGARFQSHELQSDMDITKCFIEGDKNGELLLDFLTETCDFRKNAPAELRDQIICDLKSPRCSTTKDGKVIFNNNLSVIVVEAD.

E28 contacts substrate. G60, E89, Q94, S120, and I142 together coordinate S-adenosyl-L-methionine. N283 serves as a coordination point for substrate.

It belongs to the class I-like SAM-binding methyltransferase superfamily. HNMT family. In terms of assembly, monomer.

The protein localises to the cytoplasm. The enzyme catalyses histamine + S-adenosyl-L-methionine = N(tau)-methylhistamine + S-adenosyl-L-homocysteine + H(+). Functionally, inactivates histamine by N-methylation. Plays an important role in degrading histamine and in regulating the airway response to histamine. This is Histamine N-methyltransferase B (hnmt-b) from Xenopus laevis (African clawed frog).